Reading from the N-terminus, the 92-residue chain is Probable Fe(2+)-trafficking protein (92 aa).

Belongs to the Fe(2+)-trafficking protein family.

Could be a mediator in iron transactions between iron acquisition and iron-requiring processes, such as synthesis and/or repair of Fe-S clusters in biosynthetic enzymes. The sequence is that of Probable Fe(2+)-trafficking protein from Shewanella sp. (strain W3-18-1).